A 70-amino-acid chain; its full sequence is Small ribosomal subunit protein bS21 (70 aa).

It belongs to the bacterial ribosomal protein bS21 family.

This Delftia acidovorans (strain DSM 14801 / SPH-1) protein is Small ribosomal subunit protein bS21.